The chain runs to 76 residues: MYSMATGTVKWFNNAKGFGFICPEGEDGDIFAHYSTIQMDGYRTLKAGQQVSYQVEQGPKGYHASCVVPIEGQSAK.

The CSD domain occupies glycine 7–valine 67.

The protein resides in the cytoplasm. The sequence is that of Cold shock-like protein CspD (cspD) from Vibrio cholerae serotype O1 (strain ATCC 39315 / El Tor Inaba N16961).